The chain runs to 426 residues: Putative competence-damage inducible protein (426 aa).

The protein belongs to the CinA family.

This Symbiobacterium thermophilum (strain DSM 24528 / JCM 14929 / IAM 14863 / T) protein is Putative competence-damage inducible protein.